We begin with the raw amino-acid sequence, 133 residues long: Large ribosomal subunit protein bL20 (133 aa).

Belongs to the bacterial ribosomal protein bL20 family.

In terms of biological role, binds directly to 23S ribosomal RNA and is necessary for the in vitro assembly process of the 50S ribosomal subunit. It is not involved in the protein synthesizing functions of that subunit. The sequence is that of Large ribosomal subunit protein bL20 from Mesorhizobium japonicum (strain LMG 29417 / CECT 9101 / MAFF 303099) (Mesorhizobium loti (strain MAFF 303099)).